Reading from the N-terminus, the 537-residue chain is Probable feruloyl esterase ARB_07085 (537 aa).

A signal peptide spans M1–S22. N-linked (GlcNAc...) asparagine glycans are attached at residues N67, N76, and N189. Intrachain disulfides connect C196/C459, C263/C280, and C508/C529. The Acyl-ester intermediate role is filled by S197. Ca(2+) is bound by residues D264, D267, V269, D271, and V273. N339 is a glycosylation site (N-linked (GlcNAc...) asparagine). Active-site charge relay system residues include D419 and H458.

Belongs to the tannase family.

The protein localises to the secreted. It catalyses the reaction feruloyl-polysaccharide + H2O = ferulate + polysaccharide.. Its function is as follows. Hydrolyzes the feruloyl-arabinose ester bond in arabinoxylans as well as the feruloyl-galactose and feruloyl-arabinose ester bonds. In Arthroderma benhamiae (strain ATCC MYA-4681 / CBS 112371) (Trichophyton mentagrophytes), this protein is Probable feruloyl esterase ARB_07085.